Reading from the N-terminus, the 461-residue chain is Chromosomal replication initiator protein DnaA (461 aa).

Residues 1–87 (MAVSLWQQCI…IGSRPSAKPV (87 aa)) are domain I, interacts with DnaA modulators. Residues 87 to 124 (VVQATAAVRTSRPVTREVTKPSFNTPHAEPMANANHRS) form a domain II region. Positions 99–125 (PVTREVTKPSFNTPHAEPMANANHRSN) are disordered. A domain III, AAA+ region region spans residues 125–341 (NINPTYQFDN…GALNRVIANA (217 aa)). Residues G169, G171, K172, and T173 each coordinate ATP. The domain IV, binds dsDNA stretch occupies residues 342 to 461 (NFTGRPITID…YANLIRTLSS (120 aa)).

Belongs to the DnaA family. Oligomerizes as a right-handed, spiral filament on DNA at oriC.

The protein resides in the cytoplasm. Functionally, plays an essential role in the initiation and regulation of chromosomal replication. ATP-DnaA binds to the origin of replication (oriC) to initiate formation of the DNA replication initiation complex once per cell cycle. Binds the DnaA box (a 9 base pair repeat at the origin) and separates the double-stranded (ds)DNA. Forms a right-handed helical filament on oriC DNA; dsDNA binds to the exterior of the filament while single-stranded (ss)DNA is stabiized in the filament's interior. The ATP-DnaA-oriC complex binds and stabilizes one strand of the AT-rich DNA unwinding element (DUE), permitting loading of DNA polymerase. After initiation quickly degrades to an ADP-DnaA complex that is not apt for DNA replication. Binds acidic phospholipids. This is Chromosomal replication initiator protein DnaA from Shewanella pealeana (strain ATCC 700345 / ANG-SQ1).